Here is a 469-residue protein sequence, read N- to C-terminus: UDP-N-acetylmuramate--L-alanine ligase (469 aa).

122 to 128 provides a ligand contact to ATP; that stretch reads GTHGKTT.

This sequence belongs to the MurCDEF family.

The protein localises to the cytoplasm. It carries out the reaction UDP-N-acetyl-alpha-D-muramate + L-alanine + ATP = UDP-N-acetyl-alpha-D-muramoyl-L-alanine + ADP + phosphate + H(+). Its pathway is cell wall biogenesis; peptidoglycan biosynthesis. Cell wall formation. The protein is UDP-N-acetylmuramate--L-alanine ligase of Legionella pneumophila subsp. pneumophila (strain Philadelphia 1 / ATCC 33152 / DSM 7513).